Here is a 275-residue protein sequence, read N- to C-terminus: Hydroxyethylthiazole kinase (275 aa).

Methionine 53 lines the substrate pocket. Residues arginine 128 and serine 174 each coordinate ATP. Position 201 (glycine 201) interacts with substrate.

It belongs to the Thz kinase family. It depends on Mg(2+) as a cofactor.

It catalyses the reaction 5-(2-hydroxyethyl)-4-methylthiazole + ATP = 4-methyl-5-(2-phosphooxyethyl)-thiazole + ADP + H(+). Its pathway is cofactor biosynthesis; thiamine diphosphate biosynthesis; 4-methyl-5-(2-phosphoethyl)-thiazole from 5-(2-hydroxyethyl)-4-methylthiazole: step 1/1. Catalyzes the phosphorylation of the hydroxyl group of 4-methyl-5-beta-hydroxyethylthiazole (THZ). This is Hydroxyethylthiazole kinase from Kineococcus radiotolerans (strain ATCC BAA-149 / DSM 14245 / SRS30216).